A 354-amino-acid polypeptide reads, in one-letter code: DNA polymerase IV (354 aa).

Residues 6–187 (IIHIDCDCFY…LPVARLHGVG (182 aa)) form the UmuC domain. Residues Asp10 and Asp105 each contribute to the Mg(2+) site. Glu106 is an active-site residue.

It belongs to the DNA polymerase type-Y family. In terms of assembly, monomer. It depends on Mg(2+) as a cofactor.

It localises to the cytoplasm. It carries out the reaction DNA(n) + a 2'-deoxyribonucleoside 5'-triphosphate = DNA(n+1) + diphosphate. Its function is as follows. Poorly processive, error-prone DNA polymerase involved in untargeted mutagenesis. Copies undamaged DNA at stalled replication forks, which arise in vivo from mismatched or misaligned primer ends. These misaligned primers can be extended by PolIV. Exhibits no 3'-5' exonuclease (proofreading) activity. May be involved in translesional synthesis, in conjunction with the beta clamp from PolIII. The protein is DNA polymerase IV of Pseudomonas entomophila (strain L48).